Reading from the N-terminus, the 516-residue chain is Cytochrome P450 monooxygenase dtxS2 (516 aa).

A helical transmembrane segment spans residues 23–43 (ILASVIVLLGLKVATILYTAF). The N-linked (GlcNAc...) asparagine glycan is linked to Asn-187. A helical transmembrane segment spans residues 229-249 (VLVPLLVFPYISWLLVWWLLS). Residue Cys-458 coordinates heme.

It belongs to the cytochrome P450 family. Requires heme as cofactor.

It localises to the membrane. It functions in the pathway secondary metabolite biosynthesis. Cytochrome P450 monooxygenase; part of the gene cluster that mediates the biosynthesis of destruxins, insecticidal cyclic hexadepsipeptides which induce flaccid paralysis and visceral muscle contraction in insects through targeting the calcium channels and vacuolar-type ATPases. The aldo-keto reductase dtxS3 converts alpha-ketoisocaproic acid from deaminated leucine into alpha-hydroxyisocaproic acid (HIC), which is the first substrate for destruxin assembly by dtxS1. L-aspartate decarboxylase dtxS4 converts aspartic acid into beta-alanine, the last substrate for the destruxin assembly line performed by dtxS1. The nonribosomal peptide synthetase dtxS1 synthesizes destruxins B and B2, whereas the cytochrome P450 monooxygenase dtxS2 is required to convert destruxin B into other destruxin derivatives, including destructins C, D, A and E. Destruxin E-diol (ED) is further produced in a non-enzymatic manner from destruxin E. Destruxins play an important role in virulence and escape from insect host immune defenses. This Metarhizium robertsii (strain ARSEF 23 / ATCC MYA-3075) (Metarhizium anisopliae (strain ARSEF 23)) protein is Cytochrome P450 monooxygenase dtxS2.